The following is a 397-amino-acid chain: Probable protein phosphatase 2C 74 (397 aa).

The PPM-type phosphatase domain occupies 133–391 (GFWVASRRGL…DDVTVMVVDL (259 aa)). Residues D170, G171, D343, and D382 each coordinate Mn(2+).

Belongs to the PP2C family. Mg(2+) is required as a cofactor. Requires Mn(2+) as cofactor.

The catalysed reaction is O-phospho-L-seryl-[protein] + H2O = L-seryl-[protein] + phosphate. The enzyme catalyses O-phospho-L-threonyl-[protein] + H2O = L-threonyl-[protein] + phosphate. The protein is Probable protein phosphatase 2C 74 of Oryza sativa subsp. japonica (Rice).